A 536-amino-acid chain; its full sequence is Solute carrier family 2, facilitated glucose transporter member 10 (536 aa).

Residues methionine 1–serine 15 are Cytoplasmic-facing. A helical transmembrane segment spans residues leucine 16 to leucine 36. The Extracellular portion of the chain corresponds to glutamine 37 to glutamate 48. Residues leucine 49–isoleucine 69 traverse the membrane as a helical segment. The Cytoplasmic portion of the chain corresponds to aspartate 70–asparagine 82. Residues alanine 83–leucine 103 traverse the membrane as a helical segment. Topologically, residues glycine 104 to serine 107 are extracellular. A helical membrane pass occupies residues valine 108–glycine 128. The Cytoplasmic portion of the chain corresponds to proline 129–arginine 132. A helical membrane pass occupies residues glycine 133 to leucine 153. At asparagine 154–histidine 166 the chain is on the extracellular side. The chain crosses the membrane as a helical span at residues methionine 167–alanine 187. Topologically, residues glycine 188–threonine 232 are cytoplasmic. Residues valine 233–tyrosine 253 traverse the membrane as a helical segment. Position 242 to 243 (glutamine 242 to glutamine 243) interacts with D-glucose. Over alanine 254–alanine 269 the chain is Extracellular. Residues valine 270–leucine 290 traverse the membrane as a helical segment. Topologically, residues valine 291–valine 298 are cytoplasmic. A helical transmembrane segment spans residues leucine 299–phenylalanine 319. Over alanine 320–threonine 402 the chain is Extracellular. Residues leucine 403–phenylalanine 423 form a helical membrane-spanning segment. Residues glycine 424–arginine 442 lie on the Cytoplasmic side of the membrane. Tryptophan 428 lines the D-glucose pocket. A helical membrane pass occupies residues alanine 443–leucine 463. Residues aspartate 464–alanine 468 are Extracellular-facing. The chain crosses the membrane as a helical span at residues isoleucine 469–isoleucine 489. At tyrosine 490–serine 536 the chain is on the cytoplasmic side.

This sequence belongs to the major facilitator superfamily. Sugar transporter (TC 2.A.1.1) family. Glucose transporter subfamily.

The protein resides in the endomembrane system. The protein localises to the cytoplasm. It is found in the perinuclear region. It carries out the reaction D-glucose(out) = D-glucose(in). Functionally, facilitative glucose transporter required for the development of the cardiovascular system. This Mus musculus (Mouse) protein is Solute carrier family 2, facilitated glucose transporter member 10.